Here is a 382-residue protein sequence, read N- to C-terminus: Queuine tRNA-ribosyltransferase (382 aa).

Catalysis depends on D96, which acts as the Proton acceptor. Residues D96–F100, D151, Q194, and G221 contribute to the substrate site. Positions G252 to S258 are RNA binding. The active-site Nucleophile is D271. The tract at residues T276–R280 is RNA binding; important for wobble base 34 recognition. 4 residues coordinate Zn(2+): C309, C311, C314, and H340.

It belongs to the queuine tRNA-ribosyltransferase family. Homodimer. Within each dimer, one monomer is responsible for RNA recognition and catalysis, while the other monomer binds to the replacement base PreQ1. The cofactor is Zn(2+).

It carries out the reaction 7-aminomethyl-7-carbaguanine + guanosine(34) in tRNA = 7-aminomethyl-7-carbaguanosine(34) in tRNA + guanine. It functions in the pathway tRNA modification; tRNA-queuosine biosynthesis. Functionally, catalyzes the base-exchange of a guanine (G) residue with the queuine precursor 7-aminomethyl-7-deazaguanine (PreQ1) at position 34 (anticodon wobble position) in tRNAs with GU(N) anticodons (tRNA-Asp, -Asn, -His and -Tyr). Catalysis occurs through a double-displacement mechanism. The nucleophile active site attacks the C1' of nucleotide 34 to detach the guanine base from the RNA, forming a covalent enzyme-RNA intermediate. The proton acceptor active site deprotonates the incoming PreQ1, allowing a nucleophilic attack on the C1' of the ribose to form the product. After dissociation, two additional enzymatic reactions on the tRNA convert PreQ1 to queuine (Q), resulting in the hypermodified nucleoside queuosine (7-(((4,5-cis-dihydroxy-2-cyclopenten-1-yl)amino)methyl)-7-deazaguanosine). The protein is Queuine tRNA-ribosyltransferase of Lactococcus lactis subsp. lactis (strain IL1403) (Streptococcus lactis).